A 306-amino-acid polypeptide reads, in one-letter code: UDP-3-O-acyl-N-acetylglucosamine deacetylase (306 aa).

3 residues coordinate Zn(2+): histidine 79, histidine 238, and aspartate 242. Histidine 265 (proton donor) is an active-site residue.

The protein belongs to the LpxC family. Zn(2+) serves as cofactor.

It carries out the reaction a UDP-3-O-[(3R)-3-hydroxyacyl]-N-acetyl-alpha-D-glucosamine + H2O = a UDP-3-O-[(3R)-3-hydroxyacyl]-alpha-D-glucosamine + acetate. It participates in glycolipid biosynthesis; lipid IV(A) biosynthesis; lipid IV(A) from (3R)-3-hydroxytetradecanoyl-[acyl-carrier-protein] and UDP-N-acetyl-alpha-D-glucosamine: step 2/6. Functionally, catalyzes the hydrolysis of UDP-3-O-myristoyl-N-acetylglucosamine to form UDP-3-O-myristoylglucosamine and acetate, the committed step in lipid A biosynthesis. The polypeptide is UDP-3-O-acyl-N-acetylglucosamine deacetylase (Hamiltonella defensa subsp. Acyrthosiphon pisum (strain 5AT)).